The following is a 150-amino-acid chain: uncharacterized protein (150 aa).

3 consecutive transmembrane segments (helical) span residues Leu-48–Phe-68, Val-89–Pro-109, and Arg-123–Leu-143.

To M.pneumoniae MPN_085 central region.

The protein localises to the cell membrane. This is an uncharacterized protein from Mycoplasma pneumoniae (strain ATCC 29342 / M129 / Subtype 1) (Mycoplasmoides pneumoniae).